The chain runs to 103 residues: Large ribosomal subunit protein bL21 (103 aa).

Belongs to the bacterial ribosomal protein bL21 family. In terms of assembly, part of the 50S ribosomal subunit. Contacts protein L20.

Its function is as follows. This protein binds to 23S rRNA in the presence of protein L20. In Verminephrobacter eiseniae (strain EF01-2), this protein is Large ribosomal subunit protein bL21.